A 741-amino-acid chain; its full sequence is Catalase-peroxidase 2 (741 aa).

Residues 1–28 (MQRNRIAKSVLAALAVIAMSAGSISARA) form the signal peptide. Residues 107–228 (WHGAGTYRTY…LAATQMGLIY (122 aa)) constitute a cross-link (tryptophyl-tyrosyl-methioninium (Trp-Tyr) (with M-254)). His-108 functions as the Proton acceptor in the catalytic mechanism. The tryptophyl-tyrosyl-methioninium (Tyr-Met) (with W-107) cross-link spans 228–254 (YVNPEGPNGNPDPVAAAQDIREAFGRM). Residue His-269 coordinates heme b.

The protein belongs to the peroxidase family. Peroxidase/catalase subfamily. As to quaternary structure, homodimer or homotetramer. Heme b serves as cofactor. Post-translationally, formation of the three residue Trp-Tyr-Met cross-link is important for the catalase, but not the peroxidase activity of the enzyme.

The enzyme catalyses H2O2 + AH2 = A + 2 H2O. The catalysed reaction is 2 H2O2 = O2 + 2 H2O. Bifunctional enzyme with both catalase and broad-spectrum peroxidase activity. This chain is Catalase-peroxidase 2, found in Burkholderia vietnamiensis (strain G4 / LMG 22486) (Burkholderia cepacia (strain R1808)).